The following is a 119-amino-acid chain: Large ribosomal subunit protein bL20 (119 aa).

The protein belongs to the bacterial ribosomal protein bL20 family.

In terms of biological role, binds directly to 23S ribosomal RNA and is necessary for the in vitro assembly process of the 50S ribosomal subunit. It is not involved in the protein synthesizing functions of that subunit. This Chloroflexus aurantiacus (strain ATCC 29366 / DSM 635 / J-10-fl) protein is Large ribosomal subunit protein bL20.